We begin with the raw amino-acid sequence, 59 residues long: Conotoxin mr5a (59 aa).

Positions Met1 to Ala22 are cleaved as a signal peptide. Positions Arg23–Asp48 are excised as a propeptide.

Contains 2 disulfide bonds that can be either 'C1-C3, C2-C4' or 'C1-C4, C2-C3', since these disulfide connectivities have been observed for conotoxins with cysteine framework V (for examples, see AC P0DQQ7 and AC P81755). Expressed by the venom duct.

The protein localises to the secreted. This Conus marmoreus (Marble cone) protein is Conotoxin mr5a.